The sequence spans 146 residues: Hemoglobin subunit beta (146 aa).

Positions 2–146 constitute a Globin domain; that stretch reads FLTPEENGHV…VANALAHKYH (145 aa). Threonine 12 carries the post-translational modification Phosphothreonine. At serine 44 the chain carries Phosphoserine. At lysine 59 the chain carries N6-acetyllysine. Histidine 63 serves as a coordination point for heme b. Residue lysine 82 is modified to N6-acetyllysine. Histidine 92 contributes to the heme b binding site. Position 93 is an S-nitrosocysteine (cysteine 93). At lysine 144 the chain carries N6-acetyllysine.

Belongs to the globin family. Heterotetramer of two alpha chains and two beta chains. Red blood cells.

In terms of biological role, involved in oxygen transport from the lung to the various peripheral tissues. This is Hemoglobin subunit beta (HBB) from Hapalemur griseus (Gray gentle lemur).